A 245-amino-acid chain; its full sequence is Ribonuclease PH (245 aa).

Phosphate is bound by residues R86 and 124-126; that span reads GTR.

It belongs to the RNase PH family. In terms of assembly, homohexameric ring arranged as a trimer of dimers.

It catalyses the reaction tRNA(n+1) + phosphate = tRNA(n) + a ribonucleoside 5'-diphosphate. In terms of biological role, phosphorolytic 3'-5' exoribonuclease that plays an important role in tRNA 3'-end maturation. Removes nucleotide residues following the 3'-CCA terminus of tRNAs; can also add nucleotides to the ends of RNA molecules by using nucleoside diphosphates as substrates, but this may not be physiologically important. Probably plays a role in initiation of 16S rRNA degradation (leading to ribosome degradation) during starvation. This Bacillus cereus (strain ATCC 10987 / NRS 248) protein is Ribonuclease PH.